A 173-amino-acid polypeptide reads, in one-letter code: Nanos homolog 3 (173 aa).

Residues 23 to 51 are disordered; sequence KEGPETRLSPQPEPEPMLEPDQKRSLESS. A Nanos-type zinc finger spans residues 57–111; it reads LCSFCKHNGESRAIYQSHVLKDEAGRVLCPILRDYVCPQCGATRERAHTRRFCPL. Positions 58, 61, 74, 85, 93, 96, 104, and 109 each coordinate Zn(2+). 2 consecutive short sequence motifs (C2HC) follow at residues 58–85 and 93–109; these read CSFC…RVLC and CPQC…RRFC. Positions 123–173 are disordered; the sequence is TTRNSAGKKLVRPDKAKTQDTGHRRGGGGGAGFRGAGKSEPSPSCSPSMST. Positions 133-145 are enriched in basic and acidic residues; sequence VRPDKAKTQDTGH. Residues 161–173 show a composition bias toward low complexity; that stretch reads SEPSPSCSPSMST.

Belongs to the nanos family. In terms of assembly, binds mRNA from germ cells. Interacts with PUM2. Ovary, testis and brain (at protein level). In the ovaries, expressed during multiple stages of oogenesis, including primordial, primary, secondary and antral follicles with the highest expression in the oocytes. In the testis, expressed in germ cells, type A spermatogonia (SA), primary spermatocytes (S1), round spermatids (S3) and elongated spermatids.

Its subcellular location is the nucleus. It is found in the cytoplasm. The protein localises to the stress granule. The protein resides in the P-body. Plays a role in the maintenance of the undifferentiated state of germ cells regulating the spermatogonia cell cycle and inducing a prolonged transit in G1 phase. Affects cell proliferation probably by repressing translation of specific mRNAs. Maintains the germ cell lineage by suppressing both Bax-dependent and -independent apoptotic pathways. Essential in the early stage embryo to protect the migrating primordial germ cells (PGCs) from apoptosis. The sequence is that of Nanos homolog 3 (NANOS3) from Homo sapiens (Human).